The sequence spans 328 residues: Tyrosine recombinase XerC (328 aa).

The 88-residue stretch at 13 to 100 folds into the Core-binding (CB) domain; that stretch reads QAPHPQIAAY…AWRGWFKWMA (88 aa). The Tyr recombinase domain maps to 122–319; it reads RLPKALSVEQ…DFQHLAKIYD (198 aa). Residues arginine 162, lysine 197, histidine 271, arginine 274, and histidine 297 contribute to the active site. The O-(3'-phospho-DNA)-tyrosine intermediate role is filled by tyrosine 306.

It belongs to the 'phage' integrase family. XerC subfamily. As to quaternary structure, forms a cyclic heterotetrameric complex composed of two molecules of XerC and two molecules of XerD.

It localises to the cytoplasm. Functionally, site-specific tyrosine recombinase, which acts by catalyzing the cutting and rejoining of the recombining DNA molecules. The XerC-XerD complex is essential to convert dimers of the bacterial chromosome into monomers to permit their segregation at cell division. It also contributes to the segregational stability of plasmids. This Ralstonia pickettii (strain 12J) protein is Tyrosine recombinase XerC.